A 392-amino-acid chain; its full sequence is MNNFKRVFLIVMDSVGIGEAPDARDFNDVGANTLGHIAENMNGLNMPTMASLGLSNIRKIEGIEASAQPRAHYTKMQEASNGKDTMTGHWEIMGLHIEKPFRTFPDGFPDELIEELEQKTGRKVIGNKPASGTEILDELGQQHMDTGSLIVYTSADSVLQIAAHEEIIPIDEQYRICEIARELTLDEKYMVGRVIARPFIGEPGAFERTSNRHDYALKPFGRTVMNELKDNNYDVLALGKISDIYDGEGVTESIRTKDNNDGMVQLRKSMDKSFTGLNFLNLVDFDAKYGHRRDPVGYGKALEEFDEQLPEIIEQLHDDDLLIITADHGNDPIHHGTDHTREYVPLVVYHNQIKQAKELPIRKTFADIGATIADNFGIKLPEHGESFLNDIK.

Asp13, Asp286, His291, Asp327, His328, and His339 together coordinate Mn(2+).

It belongs to the phosphopentomutase family. The cofactor is Mn(2+).

The protein localises to the cytoplasm. The enzyme catalyses 2-deoxy-alpha-D-ribose 1-phosphate = 2-deoxy-D-ribose 5-phosphate. It carries out the reaction alpha-D-ribose 1-phosphate = D-ribose 5-phosphate. Its pathway is carbohydrate degradation; 2-deoxy-D-ribose 1-phosphate degradation; D-glyceraldehyde 3-phosphate and acetaldehyde from 2-deoxy-alpha-D-ribose 1-phosphate: step 1/2. Isomerase that catalyzes the conversion of deoxy-ribose 1-phosphate (dRib-1-P) and ribose 1-phosphate (Rib-1-P) to deoxy-ribose 5-phosphate (dRib-5-P) and ribose 5-phosphate (Rib-5-P), respectively. The sequence is that of Phosphopentomutase from Oceanobacillus iheyensis (strain DSM 14371 / CIP 107618 / JCM 11309 / KCTC 3954 / HTE831).